The chain runs to 343 residues: 4-hydroxy-2-oxovalerate aldolase 1 (343 aa).

The region spanning 8–260 (ITVHDMSLRD…ETGVDVFAIS (253 aa)) is the Pyruvate carboxyltransferase domain. 16-17 (RD) lines the substrate pocket. Mn(2+) is bound at residue Asp17. Residue His20 is the Proton acceptor of the active site. Positions 170 and 199 each coordinate substrate. Mn(2+) is bound by residues His199 and His201. Tyr290 is a substrate binding site.

The protein belongs to the 4-hydroxy-2-oxovalerate aldolase family.

It catalyses the reaction (S)-4-hydroxy-2-oxopentanoate = acetaldehyde + pyruvate. The polypeptide is 4-hydroxy-2-oxovalerate aldolase 1 (bphI) (Burkholderia cenocepacia (strain ATCC BAA-245 / DSM 16553 / LMG 16656 / NCTC 13227 / J2315 / CF5610) (Burkholderia cepacia (strain J2315))).